The chain runs to 249 residues: Cell surface glycoprotein CD200 receptor 2 (249 aa).

The signal sequence occupies residues 1–24; the sequence is MHALGRTPALTLLIFIYNFVSVYT. The Ig-like V-type domain maps to 25–124; it reads IVSVQMGTKA…GNFHKVYDLQ (100 aa). The Extracellular portion of the chain corresponds to 25–220; the sequence is IVSVQMGTKA…TTSTTPSLLT (196 aa). An intrachain disulfide couples Cys-38 to Cys-108. Asn-73, Asn-138, and Asn-171 each carry an N-linked (GlcNAc...) asparagine glycan. The Ig-like C2-type domain occupies 113–208; sequence PEGNFHKVYD…GNQSLSIELS (96 aa). A disulfide bridge links Cys-143 with Cys-192. Residues 221-241 form a helical membrane-spanning segment; the sequence is ILYVKMVLLGIILLKVGFAFF. The Cytoplasmic segment spans residues 242–249; that stretch reads QKRNVTRT.

The protein belongs to the CD200R family. As to expression, expressed in bone marrow, spleen, brain, lung, testis and thymus.

It localises to the membrane. Functionally, according to PubMed:15187158 it is a receptor for the CD200 cell surface glycoprotein. According to PubMed:16081818 it is not a receptor for the CD200/OX2 cell surface glycoprotein. Involved in the recruitment or surface expression of the TYROBP receptor. This Mus musculus (Mouse) protein is Cell surface glycoprotein CD200 receptor 2 (Cd200r1l).